The chain runs to 323 residues: Methionyl-tRNA formyltransferase (323 aa).

Ser-117–Pro-120 is a (6S)-5,6,7,8-tetrahydrofolate binding site.

The protein belongs to the Fmt family.

It carries out the reaction L-methionyl-tRNA(fMet) + (6R)-10-formyltetrahydrofolate = N-formyl-L-methionyl-tRNA(fMet) + (6S)-5,6,7,8-tetrahydrofolate + H(+). In terms of biological role, attaches a formyl group to the free amino group of methionyl-tRNA(fMet). The formyl group appears to play a dual role in the initiator identity of N-formylmethionyl-tRNA by promoting its recognition by IF2 and preventing the misappropriation of this tRNA by the elongation apparatus. The sequence is that of Methionyl-tRNA formyltransferase from Acidovorax ebreus (strain TPSY) (Diaphorobacter sp. (strain TPSY)).